A 186-amino-acid polypeptide reads, in one-letter code: Adenylate kinase (186 aa).

10–15 (GSGKGT) contacts ATP. The tract at residues 30–55 (ATGDVFRERMKTDMALRDIVSSGGYV) is NMP. AMP contacts are provided by residues T31, R36, 53–55 (GYV), 81–84 (GYPR), and Q88. The interval 122 to 132 (ARSKESGRTDD) is LID. R123 is an ATP binding site. AMP-binding residues include R129 and R140. K168 contacts ATP.

Belongs to the adenylate kinase family. In terms of assembly, monomer.

It localises to the cytoplasm. It catalyses the reaction AMP + ATP = 2 ADP. The protein operates within purine metabolism; AMP biosynthesis via salvage pathway; AMP from ADP: step 1/1. Its function is as follows. Catalyzes the reversible transfer of the terminal phosphate group between ATP and AMP. Plays an important role in cellular energy homeostasis and in adenine nucleotide metabolism. This chain is Adenylate kinase, found in Tropheryma whipplei (strain TW08/27) (Whipple's bacillus).